Reading from the N-terminus, the 91-residue chain is Putative septation protein SpoVG (91 aa).

The protein belongs to the SpoVG family.

Its function is as follows. Could be involved in septation. This Caldanaerobacter subterraneus subsp. tengcongensis (strain DSM 15242 / JCM 11007 / NBRC 100824 / MB4) (Thermoanaerobacter tengcongensis) protein is Putative septation protein SpoVG.